The chain runs to 4307 residues: Cytoplasmic dynein 2 heavy chain 1 (4307 aa).

The segment at 1–1650 (MANGTADVRK…CVQMVDSEFQ (1650 aa)) is stem. An ATP-binding site is contributed by 145–152 (LGIVLRRS). A coiled-coil region spans residues 1074–1103 (NTLDKSAKLIKEKKIEFDDLEVTRKKLVDD). AAA regions lie at residues 1651–1875 (YTYE…VLRG), 1938–2161 (ELSA…KQND), 2251–2505 (ADDF…WVLG), and 2617–2863 (HYGR…ESCK). ATP is bound by residues 1689–1696 (GPAGTGKT), 1979–1986 (GPSGAGKS), 2291–2298 (GPEGCGKG), and 2655–2662 (GRSGVGRR). The tract at residues 2881–3169 (AISSSKKKEL…AEVSKAQETI (289 aa)) is stalk. 3 coiled-coil regions span residues 2897–2982 (LQAG…KEVQ), 3109–3200 (LETE…LATL), and 3408–3442 (IQHE…SLLE). 2 AAA regions span residues 3244–3473 (LCTE…LIQE) and 3690–3905 (MALF…IIDR).

Belongs to the dynein heavy chain family. The cytoplasmic dynein complex 2 is probably composed by a heavy chain DYNC2H1 homodimer and a number of DYNC2LI1 light intermediate chains.

It localises to the cytoplasm. It is found in the cytoskeleton. The protein localises to the cilium axoneme. The protein resides in the cell membrane. May function as a motor for intraflagellar retrograde transport. Functions in cilia biogenesis. May play a role in transport between endoplasmic reticulum and Golgi or organization of the Golgi in cells. The protein is Cytoplasmic dynein 2 heavy chain 1 (DYNC2H1) of Homo sapiens (Human).